The sequence spans 192 residues: Imidazoleglycerol-phosphate dehydratase (192 aa).

It belongs to the imidazoleglycerol-phosphate dehydratase family.

It is found in the cytoplasm. It carries out the reaction D-erythro-1-(imidazol-4-yl)glycerol 3-phosphate = 3-(imidazol-4-yl)-2-oxopropyl phosphate + H2O. It functions in the pathway amino-acid biosynthesis; L-histidine biosynthesis; L-histidine from 5-phospho-alpha-D-ribose 1-diphosphate: step 6/9. This chain is Imidazoleglycerol-phosphate dehydratase, found in Hydrogenobaculum sp. (strain Y04AAS1).